The sequence spans 215 residues: N-(5'-phosphoribosyl)anthranilate isomerase (215 aa).

It belongs to the TrpF family.

It catalyses the reaction N-(5-phospho-beta-D-ribosyl)anthranilate = 1-(2-carboxyphenylamino)-1-deoxy-D-ribulose 5-phosphate. It functions in the pathway amino-acid biosynthesis; L-tryptophan biosynthesis; L-tryptophan from chorismate: step 3/5. In Cellvibrio japonicus (strain Ueda107) (Pseudomonas fluorescens subsp. cellulosa), this protein is N-(5'-phosphoribosyl)anthranilate isomerase.